The primary structure comprises 280 residues: Foldase protein PrsA 4 (280 aa).

Residues 1–21 (MKRKKLVIGSILMGMTLSLSA) form the signal peptide. The N-palmitoyl cysteine moiety is linked to residue C22. Residue C22 is the site of S-diacylglycerol cysteine attachment. One can recognise a PpiC domain in the interval 132-222 (KPKLQVSHIL…FGYHIIKLTD (91 aa)).

The protein belongs to the PrsA family.

Its subcellular location is the cell membrane. The catalysed reaction is [protein]-peptidylproline (omega=180) = [protein]-peptidylproline (omega=0). Functionally, plays a major role in protein secretion by helping the post-translocational extracellular folding of several secreted proteins. The chain is Foldase protein PrsA 4 (prsA4) from Bacillus cereus (strain ATCC 14579 / DSM 31 / CCUG 7414 / JCM 2152 / NBRC 15305 / NCIMB 9373 / NCTC 2599 / NRRL B-3711).